Here is a 207-residue protein sequence, read N- to C-terminus: Outer-membrane lipoprotein LolB (207 aa).

The N-terminal stretch at 1-21 is a signal peptide; the sequence is MPMRKRHFYRLLPLASLLLAA. The N-palmitoyl cysteine moiety is linked to residue C22. The S-diacylglycerol cysteine moiety is linked to residue C22.

Belongs to the LolB family. Monomer.

The protein localises to the cell outer membrane. Plays a critical role in the incorporation of lipoproteins in the outer membrane after they are released by the LolA protein. The protein is Outer-membrane lipoprotein LolB of Yersinia pseudotuberculosis serotype O:1b (strain IP 31758).